Reading from the N-terminus, the 316-residue chain is Phosphate acyltransferase (316 aa).

The protein belongs to the PlsX family. As to quaternary structure, homodimer. Probably interacts with PlsY.

It localises to the cytoplasm. The catalysed reaction is a fatty acyl-[ACP] + phosphate = an acyl phosphate + holo-[ACP]. Its pathway is lipid metabolism; phospholipid metabolism. Catalyzes the reversible formation of acyl-phosphate (acyl-PO(4)) from acyl-[acyl-carrier-protein] (acyl-ACP). This enzyme utilizes acyl-ACP as fatty acyl donor, but not acyl-CoA. The chain is Phosphate acyltransferase from Chlamydia abortus (strain DSM 27085 / S26/3) (Chlamydophila abortus).